We begin with the raw amino-acid sequence, 90 residues long: Probable small nuclear ribonucleoprotein F (90 aa).

The Sm domain occupies 7–80; it reads NPRPFLQDLV…VLYIKKADEA (74 aa).

It belongs to the snRNP Sm proteins family. SmF/LSm6 subfamily.

The protein resides in the nucleus. It is found in the cytoplasm. Plays a role in pre-mRNA splicing as a core component of the spliceosomal U1, U2, U4 and U5 small nuclear ribonucleoproteins (snRNPs), the building blocks of the spliceosome. This Neurospora crassa (strain ATCC 24698 / 74-OR23-1A / CBS 708.71 / DSM 1257 / FGSC 987) protein is Probable small nuclear ribonucleoprotein F.